A 230-amino-acid chain; its full sequence is Ribosomal RNA small subunit methyltransferase G (230 aa).

S-adenosyl-L-methionine is bound by residues Gly93, Leu98, 144–145 (IE), and Arg158.

This sequence belongs to the methyltransferase superfamily. RNA methyltransferase RsmG family.

The protein localises to the cytoplasm. The enzyme catalyses guanosine(527) in 16S rRNA + S-adenosyl-L-methionine = N(7)-methylguanosine(527) in 16S rRNA + S-adenosyl-L-homocysteine. In terms of biological role, specifically methylates the N7 position of guanine in position 527 of 16S rRNA. This chain is Ribosomal RNA small subunit methyltransferase G, found in Bordetella parapertussis (strain 12822 / ATCC BAA-587 / NCTC 13253).